The primary structure comprises 346 residues: Biotin synthase (346 aa).

Positions 38–256 (QQVQVSTLLS…IAVARIMMPT (219 aa)) constitute a Radical SAM core domain. Positions 53, 57, and 60 each coordinate [4Fe-4S] cluster. Residues cysteine 97, cysteine 128, cysteine 188, and arginine 260 each coordinate [2Fe-2S] cluster.

The protein belongs to the radical SAM superfamily. Biotin synthase family. Homodimer. It depends on [4Fe-4S] cluster as a cofactor. [2Fe-2S] cluster is required as a cofactor.

It catalyses the reaction (4R,5S)-dethiobiotin + (sulfur carrier)-SH + 2 reduced [2Fe-2S]-[ferredoxin] + 2 S-adenosyl-L-methionine = (sulfur carrier)-H + biotin + 2 5'-deoxyadenosine + 2 L-methionine + 2 oxidized [2Fe-2S]-[ferredoxin]. Its pathway is cofactor biosynthesis; biotin biosynthesis; biotin from 7,8-diaminononanoate: step 2/2. In terms of biological role, catalyzes the conversion of dethiobiotin (DTB) to biotin by the insertion of a sulfur atom into dethiobiotin via a radical-based mechanism. This Salmonella choleraesuis (strain SC-B67) protein is Biotin synthase.